The following is a 249-amino-acid chain: Triosephosphate isomerase (249 aa).

Residue 9–11 (NWK) participates in substrate binding. His95 acts as the Electrophile in catalysis. Residue Glu165 is the Proton acceptor of the active site. Residues Gly171, Ser211, and 232–233 (GG) each bind substrate.

It belongs to the triosephosphate isomerase family. In terms of assembly, homodimer.

It localises to the cytoplasm. It catalyses the reaction D-glyceraldehyde 3-phosphate = dihydroxyacetone phosphate. It functions in the pathway carbohydrate biosynthesis; gluconeogenesis. The protein operates within carbohydrate degradation; glycolysis; D-glyceraldehyde 3-phosphate from glycerone phosphate: step 1/1. Its function is as follows. Involved in the gluconeogenesis. Catalyzes stereospecifically the conversion of dihydroxyacetone phosphate (DHAP) to D-glyceraldehyde-3-phosphate (G3P). This is Triosephosphate isomerase from Chlorobium phaeobacteroides (strain DSM 266 / SMG 266 / 2430).